A 162-amino-acid polypeptide reads, in one-letter code: Protein archease (162 aa).

Ca(2+) contacts are provided by Asp-34, Asp-161, and Ile-162.

Belongs to the archease family. Component of the tRNA-splicing ligase complex.

In terms of biological role, component of the tRNA-splicing ligase complex required to facilitate the enzymatic turnover of catalytic subunit RTCB. Together with ddx1, acts by facilitating the guanylylation of RTCB, a key intermediate step in tRNA ligation. The sequence is that of Protein archease (zbtb8os) from Danio rerio (Zebrafish).